The following is a 432-amino-acid chain: Glutamate-1-semialdehyde 2,1-aminomutase (432 aa).

Lys-272 carries the post-translational modification N6-(pyridoxal phosphate)lysine.

It belongs to the class-III pyridoxal-phosphate-dependent aminotransferase family. HemL subfamily. Homodimer. Requires pyridoxal 5'-phosphate as cofactor.

It localises to the cytoplasm. The enzyme catalyses (S)-4-amino-5-oxopentanoate = 5-aminolevulinate. The protein operates within porphyrin-containing compound metabolism; protoporphyrin-IX biosynthesis; 5-aminolevulinate from L-glutamyl-tRNA(Glu): step 2/2. It functions in the pathway porphyrin-containing compound metabolism; chlorophyll biosynthesis. The protein is Glutamate-1-semialdehyde 2,1-aminomutase of Cyanothece sp. (strain PCC 7425 / ATCC 29141).